Here is a 68-residue protein sequence, read N- to C-terminus: Non-specific lipid-transfer protein 2 (68 aa).

The protein belongs to the plant LTP family.

Plant non-specific lipid-transfer proteins transfer phospholipids as well as galactolipids across membranes. May play a role in wax or cutin deposition in the cell walls of expanding epidermal cells and certain secretory tissues. The protein is Non-specific lipid-transfer protein 2 of Prunus armeniaca (Apricot).